Consider the following 293-residue polypeptide: Exosome complex component RRP4 (293 aa).

Positions E79–R159 constitute an S1 motif domain. S124 carries the phosphoserine modification.

The protein belongs to the RRP4 family. In terms of assembly, component of the RNA exosome core complex (Exo-9), composed of EXOSC1, EXOSC2, EXOSC3, EXOSC4, EXOSC5, EXOSC6, EXOSC7, EXOSC8 and EXOSC9; within the complex interacts with EXOSC4 and EXOSC7. The catalytically inactive RNA exosome core complex (Exo-9) associates with the catalytic subunit EXOSC10/RRP6. Exo-9 may associate with DIS3 to form the nucleolar exosome complex, or DIS3L to form the cytoplasmic exosome complex. Exo-9 is formed by a hexameric base ring consisting of the heterodimers EXOSC4-EXOSC9, EXOSC5-EXOSC8 and EXOSC6-EXOSC7, and a cap ring consisting of EXOSC1, EXOSC2 and EXOSC3. The RNA exosome complex associates with cofactors C1D/RRP47, MPHOSPH6/MPP6 and MTREX/MTR4. Interacts with GTPBP1. Interacts with ZFP36L1 (via N-terminus).

It localises to the cytoplasm. It is found in the nucleus. The protein localises to the nucleolus. Functionally, non-catalytic component of the RNA exosome complex which has 3'-&gt;5' exoribonuclease activity and participates in a multitude of cellular RNA processing and degradation events. In the nucleus, the RNA exosome complex is involved in proper maturation of stable RNA species such as rRNA, snRNA and snoRNA, in the elimination of RNA processing by-products and non-coding 'pervasive' transcripts, such as antisense RNA species and promoter-upstream transcripts (PROMPTs), and of mRNAs with processing defects, thereby limiting or excluding their export to the cytoplasm. The RNA exosome may be involved in Ig class switch recombination (CSR) and/or Ig variable region somatic hypermutation (SHM) by targeting AICDA deamination activity to transcribed dsDNA substrates. In the cytoplasm, the RNA exosome complex is involved in general mRNA turnover and specifically degrades inherently unstable mRNAs containing AU-rich elements (AREs) within their 3' untranslated regions, and in RNA surveillance pathways, preventing translation of aberrant mRNAs. It seems to be involved in degradation of histone mRNA. The catalytic inactive RNA exosome core complex of 9 subunits (Exo-9) is proposed to play a pivotal role in the binding and presentation of RNA for ribonucleolysis, and to serve as a scaffold for the association with catalytic subunits and accessory proteins or complexes. EXOSC2 as peripheral part of the Exo-9 complex stabilizes the hexameric ring of RNase PH-domain subunits through contacts with EXOSC4 and EXOSC7. The protein is Exosome complex component RRP4 (EXOSC2) of Bos taurus (Bovine).